Consider the following 485-residue polypeptide: Glutamyl-tRNA(Gln) amidotransferase subunit A (485 aa).

Residues Lys79 and Ser154 each act as charge relay system in the active site. Ser178 functions as the Acyl-ester intermediate in the catalytic mechanism.

It belongs to the amidase family. GatA subfamily. Heterotrimer of A, B and C subunits.

The catalysed reaction is L-glutamyl-tRNA(Gln) + L-glutamine + ATP + H2O = L-glutaminyl-tRNA(Gln) + L-glutamate + ADP + phosphate + H(+). In terms of biological role, allows the formation of correctly charged Gln-tRNA(Gln) through the transamidation of misacylated Glu-tRNA(Gln) in organisms which lack glutaminyl-tRNA synthetase. The reaction takes place in the presence of glutamine and ATP through an activated gamma-phospho-Glu-tRNA(Gln). This Sulfurihydrogenibium sp. (strain YO3AOP1) protein is Glutamyl-tRNA(Gln) amidotransferase subunit A.